A 241-amino-acid chain; its full sequence is N-acetylmuramoyl-L-alanine amidase Rv3717 (241 aa).

The signal sequence occupies residues 1 to 24 (MIVGVLVAAATPIISSASATPANI). One can recognise a MurNAc-LAA domain in the interval 29–230 (VFIDPGHNGA…KYANALVRGV (202 aa)). His-35 provides a ligand contact to Zn(2+). The segment at 45–69 (RQVPTGRGGTKNCQASGTSTNSGYP) is disordered. Residues 55–67 (KNCQASGTSTNSG) show a composition bias toward polar residues. An intrachain disulfide couples Cys-57 to Cys-105. Positions 70 and 125 each coordinate Zn(2+). Residue Glu-200 is the Proton donor/acceptor of the active site.

The protein belongs to the N-acetylmuramoyl-L-alanine amidase 3 family. In terms of assembly, monomer. Zn(2+) serves as cofactor.

The protein resides in the periplasm. It carries out the reaction Hydrolyzes the link between N-acetylmuramoyl residues and L-amino acid residues in certain cell-wall glycopeptides.. The protein operates within cell wall degradation; peptidoglycan degradation. With respect to regulation, the structure reveals a short flexible hairpin turn that partially occludes the active site and may be involved in autoregulation. Cell-wall hydrolase that hydrolyzes the amide bond between N-acetylmuramic acid and L-alanine in cell-wall glycopeptides. Is able to hydrolyze the cell walls of several bacterial species (i.e. Paenibacillus sp., B.avium, E.coli DH5alpha, E.aerogenes, L.acidophilus, B.thuringiensis, B.pumilus, B.subtilis and E.coli W3110), thereby showing that it is a cell-wall hydrolase with broad-spectrum activity. May have a role in peptidoglycan fragment recycling. This Mycobacterium tuberculosis (strain ATCC 25618 / H37Rv) protein is N-acetylmuramoyl-L-alanine amidase Rv3717.